The sequence spans 474 residues: tRNA-2-methylthio-N(6)-dimethylallyladenosine synthase (474 aa).

The region spanning 3–120 (KKLHIKTWGC…LPEMINSVRG (118 aa)) is the MTTase N-terminal domain. Positions 12, 49, 83, 157, 161, and 164 each coordinate [4Fe-4S] cluster. The 233-residue stretch at 143–375 (RAEGPTAFVS…QERINQQAMA (233 aa)) folds into the Radical SAM core domain. One can recognise a TRAM domain in the interval 378–441 (RRMLGTTQRI…PNSLRGKVVR (64 aa)).

It belongs to the methylthiotransferase family. MiaB subfamily. In terms of assembly, monomer. [4Fe-4S] cluster is required as a cofactor.

It is found in the cytoplasm. It carries out the reaction N(6)-dimethylallyladenosine(37) in tRNA + (sulfur carrier)-SH + AH2 + 2 S-adenosyl-L-methionine = 2-methylsulfanyl-N(6)-dimethylallyladenosine(37) in tRNA + (sulfur carrier)-H + 5'-deoxyadenosine + L-methionine + A + S-adenosyl-L-homocysteine + 2 H(+). The enzyme catalyses N(6)-dimethylallyladenosine(37) in tRNA + (sulfur carrier)-SH + AH2 + S-adenosyl-L-methionine = 2-thio-N(6)-dimethylallyladenosine(37) in tRNA + (sulfur carrier)-H + 5'-deoxyadenosine + L-methionine + A + H(+). It catalyses the reaction 2-thio-N(6)-dimethylallyladenosine(37) in tRNA + S-adenosyl-L-methionine = 2-methylsulfanyl-N(6)-dimethylallyladenosine(37) in tRNA + S-adenosyl-L-homocysteine + H(+). In terms of biological role, catalyzes the methylthiolation of N6-(dimethylallyl)adenosine (i(6)A), leading to the formation of 2-methylthio-N6-(dimethylallyl)adenosine (ms(2)i(6)A) at position 37 in tRNAs that read codons beginning with uridine. The polypeptide is tRNA-2-methylthio-N(6)-dimethylallyladenosine synthase (Salmonella typhimurium (strain LT2 / SGSC1412 / ATCC 700720)).